The primary structure comprises 33 residues: Photosystem II reaction center protein Psb30 (33 aa).

A helical transmembrane segment spans residues 5-25 (ILSQLIAIAVTLFLGPVVVIL).

It belongs to the Psb30/Ycf12 family. PSII is composed of 1 copy each of membrane proteins PsbA, PsbB, PsbC, PsbD, PsbE, PsbF, PsbH, PsbI, PsbJ, PsbK, PsbL, PsbM, PsbT, PsbX, PsbY, PsbZ, Psb30/Ycf12, peripheral proteins of the oxygen-evolving complex and a large number of cofactors. It forms dimeric complexes.

The protein localises to the plastid. Its subcellular location is the chloroplast thylakoid membrane. Its function is as follows. A core subunit of photosystem II (PSII), probably helps stabilize the reaction center. The chain is Photosystem II reaction center protein Psb30 from Oedogonium cardiacum (Filamentous green alga).